The sequence spans 136 residues: Outer envelope pore protein 16-4, chloroplastic (136 aa).

The contains 4 beta strands stretch occupies residues 1–59; it reads MEEELLSAVPCSSLTVESVLRVATAGGLYGLCAGPRDARKIGLSGVSQASFVAKSIGRF. Transmembrane regions (helical) follow at residues 18-34, 56-72, 86-102, and 110-126; these read SVLR…LCAG, IGRF…VFTM, WVNA…AVAI, and VVGM…LANC.

Belongs to the Tim17/Tim22/Tim23 family. Plastid outer envelope porin OEP16 (TC 1.B.30) subfamily. As to quaternary structure, homodimer and oligomers in membrane.

It localises to the plastid. The protein localises to the chloroplast outer membrane. Voltage-dependent high-conductance channel with a slight cation-selectivity; selective for amino acids but excludes triosephosphates or uncharged sugars. Non-essential amino acid-selective channel protein and translocation pore for NADPH:protochlorophyllide oxidoreductase A (PORA) and possibly PORB. This chain is Outer envelope pore protein 16-4, chloroplastic (OEP164), found in Arabidopsis thaliana (Mouse-ear cress).